Reading from the N-terminus, the 70-residue chain is Small ribosomal subunit protein bS21 (70 aa).

This sequence belongs to the bacterial ribosomal protein bS21 family.

This chain is Small ribosomal subunit protein bS21, found in Neisseria gonorrhoeae (strain ATCC 700825 / FA 1090).